The primary structure comprises 284 residues: Urease accessory protein UreD (284 aa).

The disordered stretch occupies residues 1–28 (MQSEQQAIGASGCEDAQQPVRQQRARGR).

Belongs to the UreD family. As to quaternary structure, ureD, UreF and UreG form a complex that acts as a GTP-hydrolysis-dependent molecular chaperone, activating the urease apoprotein by helping to assemble the nickel containing metallocenter of UreC. The UreE protein probably delivers the nickel.

It is found in the cytoplasm. Functionally, required for maturation of urease via the functional incorporation of the urease nickel metallocenter. The protein is Urease accessory protein UreD of Agrobacterium fabrum (strain C58 / ATCC 33970) (Agrobacterium tumefaciens (strain C58)).